The primary structure comprises 740 residues: Ribosome-releasing factor 2, mitochondrial (740 aa).

The transit peptide at 1–29 (MLKYAWQSGPKQSNRWLWHLSNQIWKRSY) directs the protein to the mitochondrion. Residues 31 to 310 (SKIRNIGILA…AVNAYLPAPE (280 aa)) enclose the tr-type G domain. Residues 40–47 (AHIDAGKT), 104–108 (DTPGH), and 158–161 (NKMD) contribute to the GTP site.

Belongs to the TRAFAC class translation factor GTPase superfamily. Classic translation factor GTPase family. EF-G/EF-2 subfamily.

The protein localises to the mitochondrion. Its function is as follows. Mitochondrial GTPase that mediates the disassembly of ribosomes from messenger RNA at the termination of mitochondrial protein biosynthesis. Not involved in the GTP-dependent ribosomal translocation step during translation elongation. The protein is Ribosome-releasing factor 2, mitochondrial of Drosophila melanogaster (Fruit fly).